A 325-amino-acid chain; its full sequence is NADH-quinone oxidoreductase subunit H (325 aa).

Transmembrane regions (helical) follow at residues Ile11–Phe31, Phe81–Val101, Ile114–Gly134, Val154–Phe174, Met186–Val206, Phe237–Phe257, Leu265–Ile285, and Ile304–Ala324.

This sequence belongs to the complex I subunit 1 family. In terms of assembly, NDH-1 is composed of 13 different subunits. Subunits NuoA, H, J, K, L, M, N constitute the membrane sector of the complex.

The protein localises to the cell inner membrane. It catalyses the reaction a quinone + NADH + 5 H(+)(in) = a quinol + NAD(+) + 4 H(+)(out). Functionally, NDH-1 shuttles electrons from NADH, via FMN and iron-sulfur (Fe-S) centers, to quinones in the respiratory chain. The immediate electron acceptor for the enzyme in this species is believed to be ubiquinone. Couples the redox reaction to proton translocation (for every two electrons transferred, four hydrogen ions are translocated across the cytoplasmic membrane), and thus conserves the redox energy in a proton gradient. This subunit may bind ubiquinone. This chain is NADH-quinone oxidoreductase subunit H, found in Proteus mirabilis (strain HI4320).